The following is a 240-amino-acid chain: Venom hemolysin-like protein 1 (240 aa).

The N-terminal stretch at 1-18 (MQYKLILLVVGLFQASLA) is a signal peptide. A disordered region spans residues 25–50 (ESVPHPSKDVAPPDTQDSSTQTEVTT). Residues 39-50 (TQDSSTQTEVTT) show a composition bias toward polar residues.

Expressed by the venom gland (anterior main gland) (at protein level).

The protein resides in the secreted. This is Venom hemolysin-like protein 1 from Platymeris rhadamanthus (Red spot assassin bug).